Here is a 332-residue protein sequence, read N- to C-terminus: Arrestin domain-containing protein 5 (332 aa).

The segment at Ser-311–Asn-332 is disordered.

Belongs to the arrestin family.

It localises to the membrane. Its function is as follows. Plays an essential role in spermatogenesis. May be involved in the anchoring of the sperm head to the tail during spermatogenesis by affecting SEC22A-mediated SUN5 and NDC1 transport and localization. In Bos taurus (Bovine), this protein is Arrestin domain-containing protein 5 (ARRDC5).